Reading from the N-terminus, the 370-residue chain is Peptide chain release factor 1 (370 aa).

Gln-239 is modified (N5-methylglutamine).

Belongs to the prokaryotic/mitochondrial release factor family. In terms of processing, methylated by PrmC. Methylation increases the termination efficiency of RF1.

Its subcellular location is the cytoplasm. In terms of biological role, peptide chain release factor 1 directs the termination of translation in response to the peptide chain termination codons UAG and UAA. This chain is Peptide chain release factor 1, found in Bacteroides thetaiotaomicron (strain ATCC 29148 / DSM 2079 / JCM 5827 / CCUG 10774 / NCTC 10582 / VPI-5482 / E50).